A 195-amino-acid chain; its full sequence is Imidazoleglycerol-phosphate dehydratase (195 aa).

This sequence belongs to the imidazoleglycerol-phosphate dehydratase family.

Its subcellular location is the cytoplasm. The enzyme catalyses D-erythro-1-(imidazol-4-yl)glycerol 3-phosphate = 3-(imidazol-4-yl)-2-oxopropyl phosphate + H2O. It functions in the pathway amino-acid biosynthesis; L-histidine biosynthesis; L-histidine from 5-phospho-alpha-D-ribose 1-diphosphate: step 6/9. The protein is Imidazoleglycerol-phosphate dehydratase of Thermotoga petrophila (strain ATCC BAA-488 / DSM 13995 / JCM 10881 / RKU-1).